The chain runs to 170 residues: Acetolactate synthase small subunit (170 aa).

The 75-residue stretch at T9–E83 folds into the ACT domain. K46 is covalently cross-linked (Isoglutamyl lysine isopeptide (Lys-Gln) (interchain with Q-Cter in protein Pup)).

It belongs to the acetolactate synthase small subunit family. Dimer of large and small chains.

The enzyme catalyses 2 pyruvate + H(+) = (2S)-2-acetolactate + CO2. It functions in the pathway amino-acid biosynthesis; L-isoleucine biosynthesis; L-isoleucine from 2-oxobutanoate: step 1/4. Its pathway is amino-acid biosynthesis; L-valine biosynthesis; L-valine from pyruvate: step 1/4. The polypeptide is Acetolactate synthase small subunit (ilvH) (Mycolicibacterium smegmatis (strain ATCC 700084 / mc(2)155) (Mycobacterium smegmatis)).